The sequence spans 112 residues: Large ribosomal subunit protein uL22 (112 aa).

This sequence belongs to the universal ribosomal protein uL22 family. As to quaternary structure, part of the 50S ribosomal subunit.

Its function is as follows. This protein binds specifically to 23S rRNA; its binding is stimulated by other ribosomal proteins, e.g. L4, L17, and L20. It is important during the early stages of 50S assembly. It makes multiple contacts with different domains of the 23S rRNA in the assembled 50S subunit and ribosome. In terms of biological role, the globular domain of the protein is located near the polypeptide exit tunnel on the outside of the subunit, while an extended beta-hairpin is found that lines the wall of the exit tunnel in the center of the 70S ribosome. The chain is Large ribosomal subunit protein uL22 from Desulfovibrio desulfuricans (strain ATCC 27774 / DSM 6949 / MB).